Here is a 145-residue protein sequence, read N- to C-terminus: MSQKTIKGYINLIIPAAGATPAPPIGPALGQRKVNIAAFCKDFNDATNGMEKGVPLPTVITVYDDNSFSFKVKTPPASYFLKKYAKITKGSSATKKEAMVGKVTLDACREIAKLKISDLNTKNIEAATKIICGSAASMGLEVVGN.

It belongs to the universal ribosomal protein uL11 family. As to quaternary structure, part of the ribosomal stalk of the 50S ribosomal subunit. Interacts with L10 and the large rRNA to form the base of the stalk. L10 forms an elongated spine to which L12 dimers bind in a sequential fashion forming a multimeric L10(L12)X complex. One or more lysine residues are methylated.

In terms of biological role, forms part of the ribosomal stalk which helps the ribosome interact with GTP-bound translation factors. The polypeptide is Large ribosomal subunit protein uL11 (Rickettsia typhi (strain ATCC VR-144 / Wilmington)).